Reading from the N-terminus, the 418-residue chain is Flavin-dependent L-tryptophan oxidase VioA (418 aa).

Gly-13 lines the Mg(2+) pocket. Ser-15 provides a ligand contact to FAD. Residue Gly-16 participates in Mg(2+) binding. FAD contacts are provided by Asp-38, Arg-46, and Arg-64. Substrate-binding residues include Arg-64 and His-163. Leu-208 lines the FAD pocket. Ala-240 is a binding site for Mg(2+). Tyr-309 lines the substrate pocket. Met-398 provides a ligand contact to FAD.

This sequence belongs to the flavin monoamine oxidase family. In terms of assembly, homodimer. Requires FAD as cofactor. The cofactor is Mg(2+).

It carries out the reaction L-tryptophan + O2 = 2-iminio-3-(indol-3-yl)propanoate + H2O2. The catalysed reaction is 7-chloro-L-tryptophan + O2 = 3-(7-chloroindol-3-yl)-2-iminopropanoate + H2O2. It participates in pigment biosynthesis; violacein biosynthesis. The enzyme generates the imine form of indole 3-pyruvate (IPA) from L-tryptophan (L-Trp), with concomitant two-electron reduction of O(2) to H(2)O(2). The chain is Flavin-dependent L-tryptophan oxidase VioA (vioA) from Chromobacterium violaceum (strain ATCC 12472 / DSM 30191 / JCM 1249 / CCUG 213 / NBRC 12614 / NCIMB 9131 / NCTC 9757 / MK).